Here is a 197-residue protein sequence, read N- to C-terminus: Fucoxanthin-chlorophyll a-c binding protein D, chloroplastic (197 aa).

The N-terminal 31 residues, 1–31 (MKTAVIASLIAGAAAFAPAKNAARTSVATNM), are a transit peptide targeting the chloroplast. The next 3 membrane-spanning stretches (helical) occupy residues 73 to 94 (ISMLAVVGYLVQEAGVRLPGTI), 114 to 133 (PAGGLVQLLFFIGVLESSVM), and 174 to 196 (GRAAQMGILALMVHEQLGVSLLP).

Belongs to the fucoxanthin chlorophyll protein family. In terms of assembly, the LHC complex of chromophytic algae is composed of fucoxanthin, chlorophyll A and C bound non-covalently by fucoxanthin chlorophyll proteins (FCPs). The ratio of the pigments in LHC; fucoxanthin: chlorophyll C: chlorophyll A; (0.6-1): (0.1-0.3): (1).

The protein resides in the plastid. It is found in the chloroplast thylakoid membrane. Functionally, the light-harvesting complex (LHC) functions as a light receptor, it captures and delivers excitation energy to photosystems with which it is closely associated. Energy is transferred from the carotenoid and chlorophyll C (or B) to chlorophyll A and the photosynthetic reaction centers where it is used to synthesize ATP and reducing power. The sequence is that of Fucoxanthin-chlorophyll a-c binding protein D, chloroplastic (FCPD) from Phaeodactylum tricornutum (Diatom).